The following is a 309-amino-acid chain: MSDRVIRIATRKSALAMWQAEYVQAKLLEAHPQLKVELVPMSTQGDRILDTPLAKIGGKGLFIKELEVAMSEGRADIAVHSMKDVPVDFPAGFGLHCICERENPYDAFVSNTYASIEELPQGAIVGTSSLRRQCQIRSARPDLTIRDLRGNVNTRLAKLDDGQYDAIILAAAGLIRLEMQDRIKTYIEPTVSLPAVGQGAVGIECRNDDAELIELLKPLNHSDTESRVKAERAMNAKLNGGCQVPIGSYAVLNGDELYLRGLVGSPDGSVLLQAEKRGNVNDALSIGVDVAEQLLEKGAGDILQALYKD.

Residue C242 is modified to S-(dipyrrolylmethanemethyl)cysteine.

Belongs to the HMBS family. Monomer. The cofactor is dipyrromethane.

The catalysed reaction is 4 porphobilinogen + H2O = hydroxymethylbilane + 4 NH4(+). It functions in the pathway porphyrin-containing compound metabolism; protoporphyrin-IX biosynthesis; coproporphyrinogen-III from 5-aminolevulinate: step 2/4. Functionally, tetrapolymerization of the monopyrrole PBG into the hydroxymethylbilane pre-uroporphyrinogen in several discrete steps. The chain is Porphobilinogen deaminase from Pseudoalteromonas atlantica (strain T6c / ATCC BAA-1087).